A 66-amino-acid polypeptide reads, in one-letter code: Stress-associated endoplasmic reticulum protein 1 (66 aa).

Positions M1–A31 are disordered. Positions N17 to N30 are enriched in polar residues. A helical transmembrane segment spans residues G39–I59.

It belongs to the RAMP4 family. As to quaternary structure, interacts with SEC61B, SEC61A1 and the SEC61 complex. Interacts with CANX.

Its subcellular location is the membrane. The protein resides in the endoplasmic reticulum membrane. Functionally, interacts with target proteins during their translocation into the lumen of the endoplasmic reticulum. Protects unfolded target proteins against degradation during ER stress. May facilitate glycosylation of target proteins after termination of ER stress. May modulate the use of N-glycosylation sites on target proteins. The sequence is that of Stress-associated endoplasmic reticulum protein 1 (SERP1) from Bos taurus (Bovine).